A 704-amino-acid polypeptide reads, in one-letter code: Elongation factor G (704 aa).

Positions 10 to 290 constitute a tr-type G domain; it reads KKVRNIGIMA…AVVDYLPSPL (281 aa). Residues 19–26, 83–87, and 137–140 each bind GTP; these read AHIDAGKT, DTPGH, and NKMD.

This sequence belongs to the TRAFAC class translation factor GTPase superfamily. Classic translation factor GTPase family. EF-G/EF-2 subfamily.

Its subcellular location is the cytoplasm. Catalyzes the GTP-dependent ribosomal translocation step during translation elongation. During this step, the ribosome changes from the pre-translocational (PRE) to the post-translocational (POST) state as the newly formed A-site-bound peptidyl-tRNA and P-site-bound deacylated tRNA move to the P and E sites, respectively. Catalyzes the coordinated movement of the two tRNA molecules, the mRNA and conformational changes in the ribosome. The polypeptide is Elongation factor G (Kocuria rhizophila (strain ATCC 9341 / DSM 348 / NBRC 103217 / DC2201)).